A 212-amino-acid chain; its full sequence is Large ribosomal subunit protein uL3 (212 aa).

At Gln-153 the chain carries N5-methylglutamine.

Belongs to the universal ribosomal protein uL3 family. In terms of assembly, part of the 50S ribosomal subunit. Forms a cluster with proteins L14 and L19. Methylated by PrmB.

One of the primary rRNA binding proteins, it binds directly near the 3'-end of the 23S rRNA, where it nucleates assembly of the 50S subunit. The polypeptide is Large ribosomal subunit protein uL3 (Dechloromonas aromatica (strain RCB)).